A 298-amino-acid polypeptide reads, in one-letter code: UDP-N-acetylenolpyruvoylglucosamine reductase (298 aa).

The region spanning 26 to 191 (KTGGEAEYLA…LSATFSLTPG (166 aa)) is the FAD-binding PCMH-type domain. Arginine 170 is a catalytic residue. The active-site Proton donor is the serine 220. The active site involves glutamate 290.

The protein belongs to the MurB family. The cofactor is FAD.

The protein localises to the cytoplasm. The catalysed reaction is UDP-N-acetyl-alpha-D-muramate + NADP(+) = UDP-N-acetyl-3-O-(1-carboxyvinyl)-alpha-D-glucosamine + NADPH + H(+). It functions in the pathway cell wall biogenesis; peptidoglycan biosynthesis. Its function is as follows. Cell wall formation. The polypeptide is UDP-N-acetylenolpyruvoylglucosamine reductase (Lactobacillus helveticus (strain DPC 4571)).